The sequence spans 246 residues: Nodulin-25 (246 aa).

The signal sequence occupies residues 1-24; sequence MVYSNTYMLLGLGVFVLLSSHVLA.

The protein localises to the symbiosome. Its subcellular location is the peribacteroid space. Functionally, involved in the development and function of nodules. It might participate in the biological process of symbiotic nitrogen fixation. The protein is Nodulin-25 (NMS-25) of Medicago sativa (Alfalfa).